Reading from the N-terminus, the 310-residue chain is Malate dehydrogenase (310 aa).

NAD(+) is bound by residues 7–12 and Asp-32; that span reads GAGNVG. Residues Arg-81 and Arg-87 each coordinate substrate. Residues Asn-94 and 117-119 contribute to the NAD(+) site; that span reads VSN. Residues Asn-119 and Arg-150 each coordinate substrate. His-174 (proton acceptor) is an active-site residue.

It belongs to the LDH/MDH superfamily. MDH type 3 family. In terms of assembly, homotetramer; arranged as a dimer of dimers.

The enzyme catalyses (S)-malate + NAD(+) = oxaloacetate + NADH + H(+). Functionally, catalyzes the reversible oxidation of malate to oxaloacetate. The sequence is that of Malate dehydrogenase from Prosthecochloris vibrioformis (Chlorobium vibrioforme).